We begin with the raw amino-acid sequence, 180 residues long: Flavin prenyltransferase UbiX (180 aa).

Residues 9–11, Ser-33, 84–87, and Arg-119 each bind FMN; these read GAS and SITT. Residues Tyr-149 and Arg-165 each contribute to the dimethylallyl phosphate site.

It belongs to the UbiX/PAD1 family.

It catalyses the reaction dimethylallyl phosphate + FMNH2 = prenylated FMNH2 + phosphate. Its function is as follows. Flavin prenyltransferase that catalyzes the synthesis of the prenylated FMN cofactor (prenyl-FMN) for 4-hydroxy-3-polyprenylbenzoic acid decarboxylase UbiD. The prenyltransferase is metal-independent and links a dimethylallyl moiety from dimethylallyl monophosphate (DMAP) to the flavin N5 and C6 atoms of FMN. This is Flavin prenyltransferase UbiX from Thermoplasma acidophilum (strain ATCC 25905 / DSM 1728 / JCM 9062 / NBRC 15155 / AMRC-C165).